The sequence spans 217 residues: Uracil-DNA glycosylase (217 aa).

The active-site Proton acceptor is the Asp62.

The protein belongs to the uracil-DNA glycosylase (UDG) superfamily. UNG family.

It localises to the cytoplasm. The catalysed reaction is Hydrolyzes single-stranded DNA or mismatched double-stranded DNA and polynucleotides, releasing free uracil.. Excises uracil residues from the DNA which can arise as a result of misincorporation of dUMP residues by DNA polymerase or due to deamination of cytosine. In Streptococcus pyogenes serotype M1, this protein is Uracil-DNA glycosylase.